We begin with the raw amino-acid sequence, 254 residues long: Imidazole glycerol phosphate synthase subunit HisF (254 aa).

Active-site residues include aspartate 11 and aspartate 130.

The protein belongs to the HisA/HisF family. Heterodimer of HisH and HisF.

It is found in the cytoplasm. It carries out the reaction 5-[(5-phospho-1-deoxy-D-ribulos-1-ylimino)methylamino]-1-(5-phospho-beta-D-ribosyl)imidazole-4-carboxamide + L-glutamine = D-erythro-1-(imidazol-4-yl)glycerol 3-phosphate + 5-amino-1-(5-phospho-beta-D-ribosyl)imidazole-4-carboxamide + L-glutamate + H(+). Its pathway is amino-acid biosynthesis; L-histidine biosynthesis; L-histidine from 5-phospho-alpha-D-ribose 1-diphosphate: step 5/9. Functionally, IGPS catalyzes the conversion of PRFAR and glutamine to IGP, AICAR and glutamate. The HisF subunit catalyzes the cyclization activity that produces IGP and AICAR from PRFAR using the ammonia provided by the HisH subunit. This is Imidazole glycerol phosphate synthase subunit HisF from Trichlorobacter lovleyi (strain ATCC BAA-1151 / DSM 17278 / SZ) (Geobacter lovleyi).